Here is a 732-residue protein sequence, read N- to C-terminus: Catalase-peroxidase (732 aa).

Residues 96–219 (WHSAGTYRIG…LGAVQMGLIY (124 aa)) constitute a cross-link (tryptophyl-tyrosyl-methioninium (Trp-Tyr) (with M-245)). Histidine 97 acts as the Proton acceptor in catalysis. A cross-link (tryptophyl-tyrosyl-methioninium (Tyr-Met) (with W-96)) is located at residues 219–245 (YVNPEGPNGHPDPVASGRDIRETFGRM). Histidine 260 lines the heme b pocket.

It belongs to the peroxidase family. Peroxidase/catalase subfamily. As to quaternary structure, homodimer or homotetramer. Heme b serves as cofactor. In terms of processing, formation of the three residue Trp-Tyr-Met cross-link is important for the catalase, but not the peroxidase activity of the enzyme.

It catalyses the reaction H2O2 + AH2 = A + 2 H2O. It carries out the reaction 2 H2O2 = O2 + 2 H2O. Bifunctional enzyme with both catalase and broad-spectrum peroxidase activity. The polypeptide is Catalase-peroxidase (Acaryochloris marina (strain MBIC 11017)).